A 487-amino-acid chain; its full sequence is MKNILKLSIAEMHDNLKKREFSAVELTKLHIEAVNNEKLNAFITKTPEIALSAAEKADYIFTHQKENLTPLTGIPVGIKDLFCTKHVRTTACSNILKNFTPQYDSTVTKRLLDNGAVMLGKLNMDEFAMGSSNSNSCFGHVKNPWVRADGVEVVPGGSSGGSSAAVAGFLCAGALGSDTGGSVRQPAALCGIVGLKPTYGRCSRFGMIAFASSLDQAGVLTRTVEDASLMLQSICGYDIQDSTSANIAVPKFSESITHTIKGKRIGIPKEYELSGKYQEYTEVSEMWAKGIQYLKDEGAEIIEISLPHTSYALPVYYIICSAEASSNLARYDGIRYGARISSDDINEMYELTRGHNFGTEVKRRILIGAYVLSSGYYDAYYNKAQRIRHLVINDFVESFKKIDYILTPTTPKEAFAINEQLDTLTMYLNDVFTVPASLAGLPAISVPIGLSKSNLPLSLQVIGNYYDEGGILNVASIIEKHTGKILK.

Catalysis depends on charge relay system residues lysine 79 and serine 158. Serine 182 acts as the Acyl-ester intermediate in catalysis.

Belongs to the amidase family. GatA subfamily. As to quaternary structure, heterotrimer of A, B and C subunits.

It carries out the reaction L-glutamyl-tRNA(Gln) + L-glutamine + ATP + H2O = L-glutaminyl-tRNA(Gln) + L-glutamate + ADP + phosphate + H(+). Its function is as follows. Allows the formation of correctly charged Gln-tRNA(Gln) through the transamidation of misacylated Glu-tRNA(Gln) in organisms which lack glutaminyl-tRNA synthetase. The reaction takes place in the presence of glutamine and ATP through an activated gamma-phospho-Glu-tRNA(Gln). This chain is Glutamyl-tRNA(Gln) amidotransferase subunit A, found in Ehrlichia chaffeensis (strain ATCC CRL-10679 / Arkansas).